The primary structure comprises 156 residues: ATP synthase subunit b (156 aa).

Residues 7–27 form a helical membrane-spanning segment; the sequence is LFVQAIVFLILVLFTMKFVWP.

This sequence belongs to the ATPase B chain family. F-type ATPases have 2 components, F(1) - the catalytic core - and F(0) - the membrane proton channel. F(1) has five subunits: alpha(3), beta(3), gamma(1), delta(1), epsilon(1). F(0) has three main subunits: a(1), b(2) and c(10-14). The alpha and beta chains form an alternating ring which encloses part of the gamma chain. F(1) is attached to F(0) by a central stalk formed by the gamma and epsilon chains, while a peripheral stalk is formed by the delta and b chains.

The protein localises to the cell inner membrane. Functionally, f(1)F(0) ATP synthase produces ATP from ADP in the presence of a proton or sodium gradient. F-type ATPases consist of two structural domains, F(1) containing the extramembraneous catalytic core and F(0) containing the membrane proton channel, linked together by a central stalk and a peripheral stalk. During catalysis, ATP synthesis in the catalytic domain of F(1) is coupled via a rotary mechanism of the central stalk subunits to proton translocation. Its function is as follows. Component of the F(0) channel, it forms part of the peripheral stalk, linking F(1) to F(0). The protein is ATP synthase subunit b of Delftia acidovorans (strain DSM 14801 / SPH-1).